Here is a 129-residue protein sequence, read N- to C-terminus: Phosphoribosyl-AMP cyclohydrolase (129 aa).

D84 provides a ligand contact to Mg(2+). C85 provides a ligand contact to Zn(2+). The Mg(2+) site is built by D86 and D88. Zn(2+) is bound by residues C101 and C108.

It belongs to the PRA-CH family. In terms of assembly, homodimer. It depends on Mg(2+) as a cofactor. Requires Zn(2+) as cofactor.

Its subcellular location is the cytoplasm. The catalysed reaction is 1-(5-phospho-beta-D-ribosyl)-5'-AMP + H2O = 1-(5-phospho-beta-D-ribosyl)-5-[(5-phospho-beta-D-ribosylamino)methylideneamino]imidazole-4-carboxamide. The protein operates within amino-acid biosynthesis; L-histidine biosynthesis; L-histidine from 5-phospho-alpha-D-ribose 1-diphosphate: step 3/9. Functionally, catalyzes the hydrolysis of the adenine ring of phosphoribosyl-AMP. This Halobacterium salinarum (strain ATCC 700922 / JCM 11081 / NRC-1) (Halobacterium halobium) protein is Phosphoribosyl-AMP cyclohydrolase.